Here is a 362-residue protein sequence, read N- to C-terminus: 3-dehydroquinate synthase (362 aa).

NAD(+)-binding positions include 72–77, 106–110, 130–131, Lys-143, and Lys-152; these read DGEAHK, GVIGD, and TT. Zn(2+) is bound by residues Glu-185, His-248, and His-265.

This sequence belongs to the sugar phosphate cyclases superfamily. Dehydroquinate synthase family. Co(2+) is required as a cofactor. Zn(2+) serves as cofactor. The cofactor is NAD(+).

It is found in the cytoplasm. The enzyme catalyses 7-phospho-2-dehydro-3-deoxy-D-arabino-heptonate = 3-dehydroquinate + phosphate. The protein operates within metabolic intermediate biosynthesis; chorismate biosynthesis; chorismate from D-erythrose 4-phosphate and phosphoenolpyruvate: step 2/7. Catalyzes the conversion of 3-deoxy-D-arabino-heptulosonate 7-phosphate (DAHP) to dehydroquinate (DHQ). The protein is 3-dehydroquinate synthase of Laribacter hongkongensis (strain HLHK9).